The primary structure comprises 700 residues: Protein kinase C, eye isozyme (700 aa).

2 Phorbol-ester/DAG-type zinc fingers span residues 71–121 (GHRF…VFKC) and 136–186 (KHGW…PPMC). The C2 domain maps to 189-310 (DISEVRGKLL…LQKEPVDGWY (122 aa)). Ca(2+) is bound by residues D222, D228, D281, D283, S286, and D289. In terms of domain architecture, Protein kinase spans 371–629 (FNFVKVIGKG…RQEITTHPFF (259 aa)). Residues 377–385 (IGKGSFGKV) and K400 contribute to the ATP site. The Proton acceptor role is filled by D495. Residues 630–700 (RNVDWDKAEA…FMNPEFITII (71 aa)) form the AGC-kinase C-terminal domain.

The protein belongs to the protein kinase superfamily. AGC Ser/Thr protein kinase family. PKC subfamily. Ca(2+) is required as a cofactor. In terms of tissue distribution, exclusively expressed in photoreceptor cells.

The catalysed reaction is L-seryl-[protein] + ATP = O-phospho-L-seryl-[protein] + ADP + H(+). It carries out the reaction L-threonyl-[protein] + ATP = O-phospho-L-threonyl-[protein] + ADP + H(+). Its function is as follows. This is a calcium-activated, phospholipid-dependent, serine- and threonine-specific enzyme. This isozyme is a negative regulator of the visual transduction cascade and has been shown to be required for photoreceptor cell inactivation and light adaptation. Negative regulation is dependent on interaction with scaffolding protein inaD. Acts in a hh-signaling pathway which regulates the Duox-dependent gut immune response to bacterial uracil; required for the activation of Cad99C and consequently Cad99C-dependent endosome formation, which is essential for the Duox-dependent production of reactive oxygen species (ROS) in response to intestinal bacterial infection. The protein is Protein kinase C, eye isozyme (inaC) of Drosophila melanogaster (Fruit fly).